Consider the following 448-residue polypeptide: UDP-N-acetylglucosamine--dolichyl-phosphate N-acetylglucosaminephosphotransferase (448 aa).

A helical transmembrane segment spans residues 24–44 (ALVAAVGFGIAGYLATDMLIP). UDP-N-acetyl-alpha-D-glucosamine-binding positions include 58-60 (KDL) and glutamate 70. Transmembrane regions (helical) follow at residues 72-92 (IGAIPAAVYLFVMFIYIPFIF) and 129-149 (YLSAILCLESTVLLGIADDLF). Lysine 156 is a dolichyl phosphate binding site. 2 helical membrane passes run 157–177 (FFLPAIAAIPLLMVYYVDFGV) and 202–222 (YVYMASMAIFCPNSINILAGV). 210–218 (IFCPNSINI) is a dolichyl phosphate binding site. Residue asparagine 217 participates in Mg(2+) binding. Asparagine 223 is a binding site for UDP-N-acetyl-alpha-D-glucosamine. 4 consecutive transmembrane segments (helical) span residues 231–251 (IVLAILALLNDLLYFSMGPLA), 256–276 (HRFSAVLIIPFLGVSLALWKW), 283–303 (VFVGDTYCYFAGMVFAVVGIL), and 309–329 (TMLLLFIPQIVNFIYSCPQLF). Aspartate 287 lines the Mg(2+) pocket. Position 336 to 338 (336 to 338 (RHR)) interacts with UDP-N-acetyl-alpha-D-glucosamine. 2 helical membrane passes run 387 to 407 (EIISTSNMTLINLTLVWFGPM) and 419 to 439 (LQFCIGILALLGRHAIGAIIF).

It belongs to the glycosyltransferase 4 family. It depends on Mg(2+) as a cofactor.

The protein resides in the endoplasmic reticulum membrane. The enzyme catalyses a di-trans,poly-cis-dolichyl phosphate + UDP-N-acetyl-alpha-D-glucosamine = an N-acetyl-alpha-D-glucosaminyl-diphospho-di-trans,poly-cis-dolichol + UMP. Its pathway is protein modification; protein glycosylation. With respect to regulation, inhibited by natural nucleoside antibiotic tunicamycin, which acts as a structural analog and competitor of UDP-GlcNAc. Its function is as follows. UDP-N-acetylglucosamine--dolichyl-phosphate N-acetylglucosaminephosphotransferase that operates in the biosynthetic pathway of dolichol-linked oligosaccharides, the glycan precursors employed in protein asparagine (N)-glycosylation. The assembly of dolichol-linked oligosaccharides begins on the cytosolic side of the endoplasmic reticulum membrane and finishes in its lumen. The sequential addition of sugars to dolichol pyrophosphate produces dolichol-linked oligosaccharides containing fourteen sugars, including two GlcNAcs, nine mannoses and three glucoses. Once assembled, the oligosaccharide is transferred from the lipid to nascent proteins by oligosaccharyltransferases. Catalyzes the initial step of dolichol-linked oligosaccharide biosynthesis, transfering GlcNAc-1-P from cytosolic UDP-GlcNAc onto the carrier lipid dolichyl phosphate (P-dolichol), yielding GlcNAc-P-P-dolichol embedded in the cytoplasmic leaflet of the endoplasmic reticulum membrane. The protein is UDP-N-acetylglucosamine--dolichyl-phosphate N-acetylglucosaminephosphotransferase (ALG7) of Saccharomyces cerevisiae (strain ATCC 204508 / S288c) (Baker's yeast).